The sequence spans 767 residues: Photosystem I P700 chlorophyll a apoprotein A1 (767 aa).

The tract at residues 1–22 is disordered; sequence MTISPPESGEKDKKILESPVKA. A compositionally biased stretch (basic and acidic residues) spans 8–22; sequence SGEKDKKILESPVKA. A run of 8 helical transmembrane segments spans residues 76–99, 162–185, 201–225, 309–327, 368–391, 407–433, 455–477, and 558–576; these read IFSAHFGHLAVIFIWMSAAFFHGA, LMALAIGAVVMAALMLHAGIFHYH, LNHHIAGLVGLGSLAWAGHCIHIGA, VSHHHLAFGVIAIIGGHMY, RHAQLSVNLAMLGSLSILISHHMY, LGLFTHHMWIGGLFIVGAGAHAGIAMV, ALISHLNWVCMWLGFHSFGLYIH, and LMIHHIHAFQIHVTVLILL. [4Fe-4S] cluster contacts are provided by Cys600 and Cys609. 2 helical membrane-spanning segments follow: residues 616–637 and 681–703; these read HVFLGLFWMYNCLSIVIFHFSW and ISMYGLMFLGAHFIWAFSLMFLF. Position 692 (His692) interacts with divinylchlorophyll a'. 2 residues coordinate divinyl chlorophyll a: Met700 and Tyr708. Residue Trp709 participates in phylloquinone binding. Residues 741-761 form a helical membrane-spanning segment; it reads AVGVTHFLVGGIATTWAFFHA.

This sequence belongs to the PsaA/PsaB family. As to quaternary structure, the PsaA/B heterodimer binds the P700 divinyl chlorophyll special pair and subsequent electron acceptors. PSI consists of a core antenna complex that captures photons, and an electron transfer chain that converts photonic excitation into a charge separation. The cyanobacterial PSI reaction center is composed of one copy each of PsaA,B,C,D,E,F,I,J,K,L,M and X, and forms trimeric complexes. Requires PSI electron transfer chain: 5 divinyl chlorophyll a, 1 divinyl chlorophyll a', 2 phylloquinones and 3 4Fe-4S clusters. PSI core antenna: 90 divinyl chlorophyll a, 22 carotenoids, 3 phospholipids and 1 galactolipid. P700 is a divinyl chlorophyll a/divinyl chlorophyll a' dimer, A0 is one or more divinyl chlorophyll a, A1 is one or both phylloquinones and FX is a shared 4Fe-4S iron-sulfur center. as cofactor.

It is found in the cellular thylakoid membrane. It carries out the reaction reduced [plastocyanin] + hnu + oxidized [2Fe-2S]-[ferredoxin] = oxidized [plastocyanin] + reduced [2Fe-2S]-[ferredoxin]. In terms of biological role, psaA and PsaB bind P700, the primary electron donor of photosystem I (PSI), as well as the electron acceptors A0, A1 and FX. PSI is a plastocyanin/cytochrome c6-ferredoxin oxidoreductase, converting photonic excitation into a charge separation, which transfers an electron from the donor P700 chlorophyll pair to the spectroscopically characterized acceptors A0, A1, FX, FA and FB in turn. Oxidized P700 is reduced on the lumenal side of the thylakoid membrane by plastocyanin or cytochrome c6. The sequence is that of Photosystem I P700 chlorophyll a apoprotein A1 from Prochlorococcus marinus subsp. pastoris (strain CCMP1986 / NIES-2087 / MED4).